Consider the following 158-residue polypeptide: Regulator of sigma D (158 aa).

This sequence belongs to the Rsd/AlgQ family. Interacts with RpoD.

Its subcellular location is the cytoplasm. Binds RpoD and negatively regulates RpoD-mediated transcription activation by preventing the interaction between the primary sigma factor RpoD with the catalytic core of the RNA polymerase and with promoter DNA. May be involved in replacement of the RNA polymerase sigma subunit from RpoD to RpoS during the transition from exponential growth to the stationary phase. The chain is Regulator of sigma D from Escherichia coli O127:H6 (strain E2348/69 / EPEC).